A 191-amino-acid chain; its full sequence is Amelogenin, X isoform (191 aa).

The N-terminal stretch at 1–16 (MGTWILFACLLGAAFA) is a signal peptide. At S32 the chain carries Phosphoserine. Positions 95 to 117 (IPQQPMMPVPGQHSMTPIQHHQP) are enriched in low complexity. The segment at 95-191 (IPQQPMMPVP…TDKTKREEVD (97 aa)) is disordered. Positions 118 to 171 (NLPPPAQQPYQPQPVQPQPHQPMQPQPPVHPMQPLPPQPPLPPMFPMQPLPPML) are enriched in pro residues.

This sequence belongs to the amelogenin family. Interacts with KRT5. Post-translationally, phosphorylated by FAM20C in vitro.

Its subcellular location is the secreted. It localises to the extracellular space. The protein localises to the extracellular matrix. In terms of biological role, plays a role in biomineralization. Seems to regulate the formation of crystallites during the secretory stage of tooth enamel development. Thought to play a major role in the structural organization and mineralization of developing enamel. The protein is Amelogenin, X isoform (AMELX) of Homo sapiens (Human).